Here is a 254-residue protein sequence, read N- to C-terminus: Coenzyme F420:L-glutamate ligase (254 aa).

GTP contacts are provided by residues 11–14 (IPLI), 40–41 (ST), and lysine 45. An a divalent metal cation-binding site is contributed by aspartate 109. Asparagine 112 contacts GTP. Residues aspartate 150, threonine 151, and glutamate 208 each contribute to the a divalent metal cation site. 206 to 213 (MGEGAGGI) contributes to the GTP binding site.

It belongs to the CofE family. As to quaternary structure, homodimer. Mg(2+) serves as cofactor. Mn(2+) is required as a cofactor. The cofactor is K(+).

It carries out the reaction oxidized coenzyme F420-0 + GTP + L-glutamate = oxidized coenzyme F420-1 + GDP + phosphate + H(+). The enzyme catalyses oxidized coenzyme F420-1 + GTP + L-glutamate = oxidized coenzyme F420-2 + GDP + phosphate + H(+). It functions in the pathway cofactor biosynthesis; coenzyme F420 biosynthesis. Functionally, catalyzes the GTP-dependent successive addition of two or more gamma-linked L-glutamates to the L-lactyl phosphodiester of 7,8-didemethyl-8-hydroxy-5-deazariboflavin (F420-0) to form coenzyme F420-0-glutamyl-glutamate (F420-2) or polyglutamated F420 derivatives. The sequence is that of Coenzyme F420:L-glutamate ligase from Methanosarcina mazei (strain ATCC BAA-159 / DSM 3647 / Goe1 / Go1 / JCM 11833 / OCM 88) (Methanosarcina frisia).